The following is a 504-amino-acid chain: Syntaphilin (504 aa).

Residues 1-74 form a disordered region; sequence MAMSLQGSRR…HGIKPPTPEQ (74 aa). Low complexity-rich tracts occupy residues 7–26 and 33–49; these read GSRRASAGSRRRTSPPVSVR and SLSSSSNSGSCKGSDSS. A coiled-coil region spans residues 79 to 161; it reads LQQKEVCIRH…VKNNLIDKDK (83 aa). The tract at residues 191–244 is disordered; the sequence is VAKEEGTGESAGGSPARSLTRSSTYTKLSDPAVCGDRQAGDPSNTPAEDRADSG. A phosphoserine mark is found at S200 and S204. A compositionally biased stretch (polar residues) spans 207-217; sequence RSLTRSSTYTK. T214 bears the Phosphothreonine mark. S219 is subject to Phosphoserine. T235 is subject to Phosphothreonine. A helical transmembrane segment spans residues 437–456; the sequence is YIVDLLAVVVPAVPTVAWLC.

In terms of assembly, binds to STX1A. Interacts with DNM1; this interaction inhibits the binding of DNM1 to AMPH and DNM1-receptor-mediated endocytosis.

The protein localises to the membrane. The protein resides in the synapse. Its subcellular location is the synaptosome. Functionally, inhibits SNARE complex formation by absorbing free STX1A. This chain is Syntaphilin, found in Rattus norvegicus (Rat).